A 258-amino-acid chain; its full sequence is Imidazole glycerol phosphate synthase subunit HisF (258 aa).

Residues Asp-11 and Asp-130 contribute to the active site.

This sequence belongs to the HisA/HisF family. As to quaternary structure, heterodimer of HisH and HisF.

It localises to the cytoplasm. The catalysed reaction is 5-[(5-phospho-1-deoxy-D-ribulos-1-ylimino)methylamino]-1-(5-phospho-beta-D-ribosyl)imidazole-4-carboxamide + L-glutamine = D-erythro-1-(imidazol-4-yl)glycerol 3-phosphate + 5-amino-1-(5-phospho-beta-D-ribosyl)imidazole-4-carboxamide + L-glutamate + H(+). It participates in amino-acid biosynthesis; L-histidine biosynthesis; L-histidine from 5-phospho-alpha-D-ribose 1-diphosphate: step 5/9. Its function is as follows. IGPS catalyzes the conversion of PRFAR and glutamine to IGP, AICAR and glutamate. The HisF subunit catalyzes the cyclization activity that produces IGP and AICAR from PRFAR using the ammonia provided by the HisH subunit. The polypeptide is Imidazole glycerol phosphate synthase subunit HisF (Shigella flexneri serotype 5b (strain 8401)).